A 130-amino-acid chain; its full sequence is Small ribosomal subunit protein uS9 (130 aa).

It belongs to the universal ribosomal protein uS9 family.

In Aliivibrio fischeri (strain MJ11) (Vibrio fischeri), this protein is Small ribosomal subunit protein uS9.